A 345-amino-acid chain; its full sequence is UDP-3-O-acylglucosamine N-acyltransferase (345 aa).

The active-site Proton acceptor is the His239.

The protein belongs to the transferase hexapeptide repeat family. LpxD subfamily. As to quaternary structure, homotrimer.

The enzyme catalyses a UDP-3-O-[(3R)-3-hydroxyacyl]-alpha-D-glucosamine + a (3R)-hydroxyacyl-[ACP] = a UDP-2-N,3-O-bis[(3R)-3-hydroxyacyl]-alpha-D-glucosamine + holo-[ACP] + H(+). It functions in the pathway bacterial outer membrane biogenesis; LPS lipid A biosynthesis. In terms of biological role, catalyzes the N-acylation of UDP-3-O-acylglucosamine using 3-hydroxyacyl-ACP as the acyl donor. Is involved in the biosynthesis of lipid A, a phosphorylated glycolipid that anchors the lipopolysaccharide to the outer membrane of the cell. The sequence is that of UDP-3-O-acylglucosamine N-acyltransferase from Geobacter metallireducens (strain ATCC 53774 / DSM 7210 / GS-15).